Consider the following 493-residue polypeptide: Putative BTB/POZ domain-containing protein L35 (493 aa).

In terms of domain architecture, BTB spans 16–87 (TDLKLTLVDD…YLVDNKSEVD (72 aa)).

This sequence belongs to the mimivirus BTB/WD family.

This Acanthamoeba polyphaga (Amoeba) protein is Putative BTB/POZ domain-containing protein L35.